The sequence spans 281 residues: N-acetylmuramic acid 6-phosphate etherase (281 aa).

Positions 63–226 (IVPRMKQGGR…TTSVMIQLGR (164 aa)) constitute an SIS domain. Glu91 serves as the catalytic Proton donor. Residue Glu122 is part of the active site.

It belongs to the GCKR-like family. MurNAc-6-P etherase subfamily. As to quaternary structure, homodimer.

The enzyme catalyses N-acetyl-D-muramate 6-phosphate + H2O = N-acetyl-D-glucosamine 6-phosphate + (R)-lactate. It participates in amino-sugar metabolism; N-acetylmuramate degradation. Functionally, specifically catalyzes the cleavage of the D-lactyl ether substituent of MurNAc 6-phosphate, producing GlcNAc 6-phosphate and D-lactate. The sequence is that of N-acetylmuramic acid 6-phosphate etherase from Bacteroides fragilis (strain ATCC 25285 / DSM 2151 / CCUG 4856 / JCM 11019 / LMG 10263 / NCTC 9343 / Onslow / VPI 2553 / EN-2).